Reading from the N-terminus, the 239-residue chain is Ribonuclease PH (239 aa).

Phosphate-binding positions include R86 and 124-126 (GTR).

It belongs to the RNase PH family. In terms of assembly, homohexameric ring arranged as a trimer of dimers.

It carries out the reaction tRNA(n+1) + phosphate = tRNA(n) + a ribonucleoside 5'-diphosphate. Its function is as follows. Phosphorolytic 3'-5' exoribonuclease that plays an important role in tRNA 3'-end maturation. Removes nucleotide residues following the 3'-CCA terminus of tRNAs; can also add nucleotides to the ends of RNA molecules by using nucleoside diphosphates as substrates, but this may not be physiologically important. Probably plays a role in initiation of 16S rRNA degradation (leading to ribosome degradation) during starvation. The chain is Ribonuclease PH from Anaeromyxobacter dehalogenans (strain 2CP-C).